Consider the following 91-residue polypeptide: Alpha-elapitoxin-Oh2b (91 aa).

A signal peptide spans 1-21 (MKTLLLTLVVMTIVCLDLGYT). 5 disulfide bridges follow: Cys24–Cys41, Cys34–Cys62, Cys47–Cys51, Cys66–Cys77, and Cys78–Cys83.

This sequence belongs to the three-finger toxin family. Long-chain subfamily. Type II alpha-neurotoxin sub-subfamily. As to quaternary structure, monomer. In terms of tissue distribution, expressed by the venom gland.

It is found in the secreted. Binds with high affinity to muscular (alpha-1/CHRNA1) and neuronal (alpha-7/CHRNA7) nicotinic acetylcholine receptor (nAChR) and inhibits acetylcholine from binding to the receptor, thereby impairing neuromuscular and neuronal transmission. Recombinant LNTX1 leads to a functional block of the muscle-type acetylcholine receptors. Has a cytotoxic activity. This neurotoxin is lethal. This chain is Alpha-elapitoxin-Oh2b, found in Ophiophagus hannah (King cobra).